The following is a 189-amino-acid chain: UPF0301 protein bbp_491 (189 aa).

The protein belongs to the UPF0301 (AlgH) family.

The chain is UPF0301 protein bbp_491 from Buchnera aphidicola subsp. Baizongia pistaciae (strain Bp).